Consider the following 147-residue polypeptide: Effector TSP1 (147 aa).

The signal sequence occupies residues 1–19 (MQITKTLVATLFAASTAFA). Disulfide bonds link Cys-44–Cys-51 and Cys-67–Cys-87.

In terms of assembly, homodimer.

Its subcellular location is the secreted. Stimulates salicylic acid signaling in host plant roots. The sequence is that of Effector TSP1 from Hypocrea virens (strain Gv29-8 / FGSC 10586) (Gliocladium virens).